Here is a 328-residue protein sequence, read N- to C-terminus: DNA-directed RNA polymerase subunit alpha (328 aa).

The interval 1 to 231 (MQTNLLKPKA…EQLAVFAQLE (231 aa)) is alpha N-terminal domain (alpha-NTD). An alpha C-terminal domain (alpha-CTD) region spans residues 248–328 (FDPILLRPVD…NWPPQGLDKR (81 aa)).

It belongs to the RNA polymerase alpha chain family. In terms of assembly, homodimer. The RNAP catalytic core consists of 2 alpha, 1 beta, 1 beta' and 1 omega subunit. When a sigma factor is associated with the core the holoenzyme is formed, which can initiate transcription.

It carries out the reaction RNA(n) + a ribonucleoside 5'-triphosphate = RNA(n+1) + diphosphate. In terms of biological role, DNA-dependent RNA polymerase catalyzes the transcription of DNA into RNA using the four ribonucleoside triphosphates as substrates. This Leptothrix cholodnii (strain ATCC 51168 / LMG 8142 / SP-6) (Leptothrix discophora (strain SP-6)) protein is DNA-directed RNA polymerase subunit alpha.